Reading from the N-terminus, the 267-residue chain is MKLALRIAYDGTAFYGFQRQPGIRTVEGELINVLTKLKIIESPEKNDFKGASRTDRGVSAFFNVVSFVPGERADLARPEVLNHNLHDLWVLGVAEVPDDFHPRFWAISKTYRYYLIDEGFELEKMVGCAKLFEGRHDFSAFARLEPGRDPVREITHISITPRHGYYVIEITGKSFLWEMVRRIVNALRFCGLSLLEPEEVGAMLSGVYEKKVPPAPPENLILWHIEYPNVEFKTDGKSLSKARRDLFERYSRALARAALFGDCLVEL.

Catalysis depends on Asp55, which acts as the Nucleophile. Position 111 (Tyr111) interacts with substrate.

Belongs to the tRNA pseudouridine synthase TruA family.

It catalyses the reaction uridine(38/39/40) in tRNA = pseudouridine(38/39/40) in tRNA. Its function is as follows. Formation of pseudouridine at positions 38, 39 and 40 in the anticodon stem and loop of transfer RNAs. The chain is tRNA pseudouridine synthase A from Thermococcus gammatolerans (strain DSM 15229 / JCM 11827 / EJ3).